We begin with the raw amino-acid sequence, 401 residues long: Argininosuccinate synthase (401 aa).

Position 9–17 (Ala9–Ser17) interacts with ATP. Tyr86 serves as a coordination point for L-citrulline. Residue Gly116 participates in ATP binding. L-aspartate-binding residues include Thr118, Asn122, and Asp123. Position 122 (Asn122) interacts with L-citrulline. L-citrulline is bound by residues Arg126, Ser174, Ser183, Glu259, and Tyr271.

It belongs to the argininosuccinate synthase family. Type 1 subfamily. As to quaternary structure, homotetramer.

The protein localises to the cytoplasm. The catalysed reaction is L-citrulline + L-aspartate + ATP = 2-(N(omega)-L-arginino)succinate + AMP + diphosphate + H(+). It functions in the pathway amino-acid biosynthesis; L-arginine biosynthesis; L-arginine from L-ornithine and carbamoyl phosphate: step 2/3. The sequence is that of Argininosuccinate synthase from Bacillus thuringiensis subsp. konkukian (strain 97-27).